The chain runs to 217 residues: 3,4-dihydroxy-2-butanone 4-phosphate synthase (217 aa).

D-ribulose 5-phosphate is bound by residues 37–38, Asp-42, 150–154, and Glu-174; these read RE and RRGHT. Glu-38 is a binding site for Mg(2+). Residue His-153 coordinates Mg(2+).

Belongs to the DHBP synthase family. In terms of assembly, homodimer. Mg(2+) is required as a cofactor. The cofactor is Mn(2+).

It carries out the reaction D-ribulose 5-phosphate = (2S)-2-hydroxy-3-oxobutyl phosphate + formate + H(+). It functions in the pathway cofactor biosynthesis; riboflavin biosynthesis; 2-hydroxy-3-oxobutyl phosphate from D-ribulose 5-phosphate: step 1/1. In terms of biological role, catalyzes the conversion of D-ribulose 5-phosphate to formate and 3,4-dihydroxy-2-butanone 4-phosphate. The protein is 3,4-dihydroxy-2-butanone 4-phosphate synthase of Shewanella sp. (strain MR-4).